A 247-amino-acid polypeptide reads, in one-letter code: Probable transcriptional regulatory protein YPK_2146 (247 aa).

Belongs to the TACO1 family.

The protein localises to the cytoplasm. The polypeptide is Probable transcriptional regulatory protein YPK_2146 (Yersinia pseudotuberculosis serotype O:3 (strain YPIII)).